We begin with the raw amino-acid sequence, 155 residues long: Small ribosomal subunit protein uS8m (155 aa).

The protein belongs to the universal ribosomal protein uS8 family. Component of the mitochondrial small ribosomal subunit (mt-SSU). Mature yeast 74S mitochondrial ribosomes consist of a small (37S) and a large (54S) subunit. The 37S small subunit contains a 15S ribosomal RNA (15S mt-rRNA) and 34 different proteins. The 54S large subunit contains a 21S rRNA (21S mt-rRNA) and 46 different proteins.

Its subcellular location is the mitochondrion. Functionally, component of the mitochondrial ribosome (mitoribosome), a dedicated translation machinery responsible for the synthesis of mitochondrial genome-encoded proteins, including at least some of the essential transmembrane subunits of the mitochondrial respiratory chain. The mitoribosomes are attached to the mitochondrial inner membrane and translation products are cotranslationally integrated into the membrane. The chain is Small ribosomal subunit protein uS8m (MRPS8) from Saccharomyces cerevisiae (strain ATCC 204508 / S288c) (Baker's yeast).